A 55-amino-acid chain; its full sequence is Ovomucoid (55 aa).

Residues 5–55 (VDCSEHPKPACTLDYRPICGSDSKTYSNKCDFCNAVMDSNGTLTLSHFGKC) form the Kazal-like domain. 3 cysteine pairs are disulfide-bonded: Cys-7–Cys-37, Cys-15–Cys-34, and Cys-23–Cys-55. The N-linked (GlcNAc...) asparagine glycan is linked to Asn-44.

The protein resides in the secreted. This Dacelo novaeguineae (Laughing kookaburra) protein is Ovomucoid.